We begin with the raw amino-acid sequence, 96 residues long: Co-chaperonin GroES (96 aa).

The protein belongs to the GroES chaperonin family. Heptamer of 7 subunits arranged in a ring. Interacts with the chaperonin GroEL.

It localises to the cytoplasm. Its function is as follows. Together with the chaperonin GroEL, plays an essential role in assisting protein folding. The GroEL-GroES system forms a nano-cage that allows encapsulation of the non-native substrate proteins and provides a physical environment optimized to promote and accelerate protein folding. GroES binds to the apical surface of the GroEL ring, thereby capping the opening of the GroEL channel. The chain is Co-chaperonin GroES from Haemophilus influenzae (strain 86-028NP).